The sequence spans 376 residues: MYTLIKKCGNAKRGRFETPHGTIETPVFMNVGTLGVIKGAVSSMDLKEIGCQVELSNTYHLHLRPGDEVIKKMGGLHKFMNWDRPILTDSGGFQVFSLAKIRKIQEEGVYFNSHIDGRRIFMGPEESMRIQSNIASTIAMAFDECIPNPSTREYVENSVARTTRWLERCKKEMDRLNSLPDTINKKQMLFGINQGGTYEDIRKAHAKTIVDMDLDGYAIGGLAVGETHEEMYRVIDEVAPIFPDNKPLYLMGVGLPSNILEAVDRGVDFFDCVLPARNGRHGHVFTKYGKINLMNAKFELDGNPIDEGCECPACKHYSRAYIRHLFKAKEMLAMRLCVLHNLYFYNKLMEDIRKAIEGDYFKEFKEEKLHNWSGKA.

Residue Asp89 is the Proton acceptor of the active site. Residues 89–93 (DSGGF), Asp143, Gln194, and Gly221 contribute to the substrate site. Positions 252 to 258 (GVGLPSN) are RNA binding. Catalysis depends on Asp271, which acts as the Nucleophile. Residues 276–280 (ARNGR) are RNA binding; important for wobble base 34 recognition. Zn(2+) contacts are provided by Cys309, Cys311, Cys314, and His340.

It belongs to the queuine tRNA-ribosyltransferase family. As to quaternary structure, homodimer. Within each dimer, one monomer is responsible for RNA recognition and catalysis, while the other monomer binds to the replacement base PreQ1. It depends on Zn(2+) as a cofactor.

The catalysed reaction is 7-aminomethyl-7-carbaguanine + guanosine(34) in tRNA = 7-aminomethyl-7-carbaguanosine(34) in tRNA + guanine. The protein operates within tRNA modification; tRNA-queuosine biosynthesis. Functionally, catalyzes the base-exchange of a guanine (G) residue with the queuine precursor 7-aminomethyl-7-deazaguanine (PreQ1) at position 34 (anticodon wobble position) in tRNAs with GU(N) anticodons (tRNA-Asp, -Asn, -His and -Tyr). Catalysis occurs through a double-displacement mechanism. The nucleophile active site attacks the C1' of nucleotide 34 to detach the guanine base from the RNA, forming a covalent enzyme-RNA intermediate. The proton acceptor active site deprotonates the incoming PreQ1, allowing a nucleophilic attack on the C1' of the ribose to form the product. After dissociation, two additional enzymatic reactions on the tRNA convert PreQ1 to queuine (Q), resulting in the hypermodified nucleoside queuosine (7-(((4,5-cis-dihydroxy-2-cyclopenten-1-yl)amino)methyl)-7-deazaguanosine). This Clostridium tetani (strain Massachusetts / E88) protein is Queuine tRNA-ribosyltransferase.